Consider the following 293-residue polypeptide: Glycine--tRNA ligase alpha subunit (293 aa).

This sequence belongs to the class-II aminoacyl-tRNA synthetase family. As to quaternary structure, tetramer of two alpha and two beta subunits.

It is found in the cytoplasm. The enzyme catalyses tRNA(Gly) + glycine + ATP = glycyl-tRNA(Gly) + AMP + diphosphate. This Picosynechococcus sp. (strain ATCC 27264 / PCC 7002 / PR-6) (Agmenellum quadruplicatum) protein is Glycine--tRNA ligase alpha subunit.